We begin with the raw amino-acid sequence, 123 residues long: Large ribosomal subunit protein uL14 (123 aa).

It belongs to the universal ribosomal protein uL14 family. As to quaternary structure, part of the 50S ribosomal subunit. Forms a cluster with proteins L3 and L19. In the 70S ribosome, L14 and L19 interact and together make contacts with the 16S rRNA in bridges B5 and B8.

Functionally, binds to 23S rRNA. Forms part of two intersubunit bridges in the 70S ribosome. The chain is Large ribosomal subunit protein uL14 from Photorhabdus laumondii subsp. laumondii (strain DSM 15139 / CIP 105565 / TT01) (Photorhabdus luminescens subsp. laumondii).